The primary structure comprises 327 residues: Ubiquinone biosynthesis protein COQ4, mitochondrial (327 aa).

Residues H208, D209, H212, and E224 each contribute to the Zn(2+) site.

Belongs to the COQ4 family. Component of a multi-subunit COQ enzyme complex, composed of at least COQ3, COQ4, COQ5, COQ6, COQ7 and COQ9. Requires Zn(2+) as cofactor.

Its subcellular location is the mitochondrion inner membrane. The enzyme catalyses a 4-hydroxy-3-methoxy-5-(all-trans-polyprenyl)benzoate + H(+) = a 2-methoxy-6-(all-trans-polyprenyl)phenol + CO2. It participates in cofactor biosynthesis; ubiquinone biosynthesis. Lyase that catalyzes the C1-decarboxylation of 4-hydroxy-3-methoxy-5-(all-trans-polyprenyl)benzoic acid into 2-methoxy-6-(all-trans-polyprenyl)phenol during ubiquinone biosynthesis. The chain is Ubiquinone biosynthesis protein COQ4, mitochondrial from Lachancea thermotolerans (strain ATCC 56472 / CBS 6340 / NRRL Y-8284) (Yeast).